The following is an 86-amino-acid chain: RNA-binding protein Hfq (86 aa).

One can recognise a Sm domain in the interval 9-68 (DPYLNTLRKEKVPVSIYLVNGIKLQGSIESFDQFVVLLKNTVSQMVYKHAISTVVPARPV). The disordered stretch occupies residues 67–86 (PVRLPSPTDGEHGDSEPGNA). Positions 75–86 (DGEHGDSEPGNA) are enriched in basic and acidic residues.

Belongs to the Hfq family. Homohexamer.

Functionally, RNA chaperone that binds small regulatory RNA (sRNAs) and mRNAs to facilitate mRNA translational regulation in response to envelope stress, environmental stress and changes in metabolite concentrations. Also binds with high specificity to tRNAs. The protein is RNA-binding protein Hfq of Pseudomonas putida (strain GB-1).